We begin with the raw amino-acid sequence, 167 residues long: NADH-quinone oxidoreductase subunit B 2 (167 aa).

Cys-38, Cys-39, Cys-103, and Cys-132 together coordinate [4Fe-4S] cluster.

This sequence belongs to the complex I 20 kDa subunit family. As to quaternary structure, NDH-1 is composed of 14 different subunits. Subunits NuoB, C, D, E, F, and G constitute the peripheral sector of the complex. [4Fe-4S] cluster serves as cofactor.

Its subcellular location is the cell inner membrane. It catalyses the reaction a quinone + NADH + 5 H(+)(in) = a quinol + NAD(+) + 4 H(+)(out). NDH-1 shuttles electrons from NADH, via FMN and iron-sulfur (Fe-S) centers, to quinones in the respiratory chain. The immediate electron acceptor for the enzyme in this species is believed to be ubiquinone. Couples the redox reaction to proton translocation (for every two electrons transferred, four hydrogen ions are translocated across the cytoplasmic membrane), and thus conserves the redox energy in a proton gradient. In Rhizobium etli (strain CIAT 652), this protein is NADH-quinone oxidoreductase subunit B 2.